Reading from the N-terminus, the 456-residue chain is 3-isopropylmalate dehydratase large subunit (456 aa).

[4Fe-4S] cluster is bound by residues Cys336, Cys396, and Cys399.

The protein belongs to the aconitase/IPM isomerase family. LeuC type 1 subfamily. As to quaternary structure, heterodimer of LeuC and LeuD. The cofactor is [4Fe-4S] cluster.

The enzyme catalyses (2R,3S)-3-isopropylmalate = (2S)-2-isopropylmalate. The protein operates within amino-acid biosynthesis; L-leucine biosynthesis; L-leucine from 3-methyl-2-oxobutanoate: step 2/4. Catalyzes the isomerization between 2-isopropylmalate and 3-isopropylmalate, via the formation of 2-isopropylmaleate. This chain is 3-isopropylmalate dehydratase large subunit, found in Staphylococcus saprophyticus subsp. saprophyticus (strain ATCC 15305 / DSM 20229 / NCIMB 8711 / NCTC 7292 / S-41).